A 323-amino-acid chain; its full sequence is Octaprenyl diphosphate synthase (323 aa).

3 residues coordinate isopentenyl diphosphate: lysine 45, arginine 48, and histidine 77. Aspartate 84 and aspartate 88 together coordinate Mg(2+). Arginine 93 is a binding site for an all-trans-polyprenyl diphosphate. Position 94 (arginine 94) interacts with isopentenyl diphosphate. 3 residues coordinate an all-trans-polyprenyl diphosphate: lysine 170, threonine 171, and glutamine 208.

It belongs to the FPP/GGPP synthase family. Mg(2+) serves as cofactor.

It catalyses the reaction 5 isopentenyl diphosphate + (2E,6E)-farnesyl diphosphate = all-trans-octaprenyl diphosphate + 5 diphosphate. Its function is as follows. Supplies octaprenyl diphosphate, the precursor for the side chain of the isoprenoid quinones ubiquinone and menaquinone. This Escherichia coli (strain K12) protein is Octaprenyl diphosphate synthase (ispB).